Here is a 115-residue protein sequence, read N- to C-terminus: Large ribosomal subunit protein uL24 (115 aa).

The protein belongs to the universal ribosomal protein uL24 family. As to quaternary structure, part of the 50S ribosomal subunit.

Functionally, one of two assembly initiator proteins, it binds directly to the 5'-end of the 23S rRNA, where it nucleates assembly of the 50S subunit. In terms of biological role, one of the proteins that surrounds the polypeptide exit tunnel on the outside of the subunit. In Synechocystis sp. (strain ATCC 27184 / PCC 6803 / Kazusa), this protein is Large ribosomal subunit protein uL24.